The sequence spans 104 residues: U20-lycotoxin-Ls1d (104 aa).

An N-terminal signal peptide occupies residues 1–30 (MFSTSDQVSKMNSRILSALLILGIATCVIA). One can recognise a WAP domain in the interval 31–76 (GGFCPKSRHPQCNLSYKINDCCAQSDCRVGSVCCVEGCGNVCRAES). 5 cysteine pairs are disulfide-bonded: Cys-34–Cys-64, Cys-42–Cys-68, Cys-51–Cys-63, Cys-52–Cys-90, and Cys-57–Cys-72.

The protein belongs to the venom protein 11 family. 02 (wap-2) subfamily. Contains 5 disulfide bonds. As to expression, expressed by the venom gland.

The protein localises to the secreted. Its function is as follows. Has antibacterial activity. This chain is U20-lycotoxin-Ls1d, found in Lycosa singoriensis (Wolf spider).